A 272-amino-acid polypeptide reads, in one-letter code: 2-succinyl-6-hydroxy-2,4-cyclohexadiene-1-carboxylate synthase (272 aa).

This sequence belongs to the AB hydrolase superfamily. MenH family. Monomer.

The enzyme catalyses 5-enolpyruvoyl-6-hydroxy-2-succinyl-cyclohex-3-ene-1-carboxylate = (1R,6R)-6-hydroxy-2-succinyl-cyclohexa-2,4-diene-1-carboxylate + pyruvate. The protein operates within quinol/quinone metabolism; 1,4-dihydroxy-2-naphthoate biosynthesis; 1,4-dihydroxy-2-naphthoate from chorismate: step 3/7. Its pathway is quinol/quinone metabolism; menaquinone biosynthesis. Functionally, catalyzes a proton abstraction reaction that results in 2,5-elimination of pyruvate from 2-succinyl-5-enolpyruvyl-6-hydroxy-3-cyclohexene-1-carboxylate (SEPHCHC) and the formation of 2-succinyl-6-hydroxy-2,4-cyclohexadiene-1-carboxylate (SHCHC). This is 2-succinyl-6-hydroxy-2,4-cyclohexadiene-1-carboxylate synthase from Yersinia pestis (strain Pestoides F).